Here is a 528-residue protein sequence, read N- to C-terminus: PC4 and SFRS1-interacting protein (528 aa).

Residues 7–64 (PGDLIFAKMKGYPHWPARVDEVPDGAVKPPTNKLPIFFFGTHETAFLGPKDIFPYSEN) form the PWWP domain. The interval 61–348 (YSENKEKYGK…EKKRETSMDS (288 aa)) is disordered. A Glycyl lysine isopeptide (Lys-Gly) (interchain with G-Cter in SUMO2) cross-link involves residue K75. A compositionally biased stretch (polar residues) spans 92–106 (FSSQQASTKQSNASS). Phosphoserine occurs at positions 102, 105, and 106. Residues 113–135 (KETNVSKEDTDQEEKASNEDVTK) show a composition bias toward basic and acidic residues. Residues T115 and T122 each carry the phosphothreonine modification. At S129 the chain carries Phosphoserine. T141 is modified (phosphothreonine). Residues 144–153 (AARRGRKRKA) show a composition bias toward basic residues. The Nuclear localization signal motif lies at 146–156 (RRGRKRKAEKQ). Residues S176 and S205 each carry the phosphoserine modification. Over residues 212-260 (DEDKSKKKGPEEKQPKKQLKKEEEGQKEEEKPRKEPDKKEGKKEVESKR) the composition is skewed to basic and acidic residues. S270 carries the phosphoserine modification. The residue at position 271 (T271) is a Phosphothreonine. Phosphoserine occurs at positions 272 and 274. Positions 285–300 (KRKGGRNFQAAHRRNM) are enriched in basic residues. Positions 303–348 (GQHEKEAGDRKRKQEEQMETEQQNKDEGKKPEVKKVEKKRETSMDS) are enriched in basic and acidic residues. Coiled coils occupy residues 306–332 (EKEA…EGKK) and 369–393 (NRCI…KHTE). An integrase-binding domain (IBD) region spans residues 338–415 (VEKKRETSMD…VSQVIMEKST (78 aa)). A Phosphoserine modification is found at S432. T435 is modified (phosphothreonine). S441 carries the post-translational modification Phosphoserine. Over residues 444-471 (EQRQHEEANKTKDQGKKGPNKKLEKEPT) the composition is skewed to basic and acidic residues. The disordered stretch occupies residues 444–528 (EQRQHEEANK…ISLKESTLDN (85 aa)). Polar residues predominate over residues 472–492 (GTKSLNGGSDAQESNHPQHNG). The span at 496-528 (EDGKDSREASSKTKPPGEEREAEISLKESTLDN) shows a compositional bias: basic and acidic residues. Citrulline is present on R515. At S520 the chain carries Phosphoserine. The residue at position 525 (T525) is a Phosphothreonine.

Belongs to the HDGF family. In terms of assembly, monomer. Interacts with IFRD1/PC4. Interacts (via IBD domain) with POGZ (via IBM motif) and CDCA7L (via IBM motifs). Interacts (via IBD domain) with KMT2A (via IBM motifs) with a moderate affinity whereas interacts with the KMT2A-MEN1 complex with a greater affinity; MEN1 enhances interaction of KMT2A with PSIP1. Interacts (via IBD domain) with IWS1 (via IBM motif), MED1 (via IBM motif) and DBF4 (via IBM motifs). Citrullinated by PADI4.

The protein resides in the nucleus. Transcriptional coactivator involved in neuroepithelial stem cell differentiation and neurogenesis. Involved in particular in lens epithelial cell gene regulation and stress responses. May play an important role in lens epithelial to fiber cell terminal differentiation. May play a protective role during stress-induced apoptosis. This is PC4 and SFRS1-interacting protein (Psip1) from Mus musculus (Mouse).